A 185-amino-acid chain; its full sequence is Uroplakin-2 (185 aa).

Positions 1-26 are cleaved as a signal peptide; that stretch reads MASPWPVWTLSWILILLAVLVPGAAA. Residues 27–85 constitute a propeptide that is removed on maturation; sequence DFNISSLSGLLSPVMTESLLVALPPCHLTGGNATLTVRRANDSKVVRSSFVVPPCRGRR. N-linked (GlcNAc...) asparagine glycans are attached at residues N29, N58, and N67. The Lumenal segment spans residues 86–156; it reads ELVSVVDSGS…IGLAMARTGG (71 aa). Residues 157–177 form a helical membrane-spanning segment; sequence MVVITVLLSVAMFLLVLGLII. The Cytoplasmic portion of the chain corresponds to 178–185; sequence ALALGARK.

It belongs to the uroplakin-2 family. In terms of assembly, interacts with uroplakin-1a (UPK1A). As to expression, bladder epithelium.

The protein localises to the cell membrane. Functionally, component of the asymmetric unit membrane (AUM); a highly specialized biomembrane elaborated by terminally differentiated urothelial cells. May play an important role in regulating the assembly of the AUM. This Bos taurus (Bovine) protein is Uroplakin-2 (UPK2).